A 623-amino-acid chain; its full sequence is Putative disease resistance protein At5g47280 (623 aa).

2 NB-ARC domains span residues 2-51 (LFNL…VSQS) and 119-249 (VDPR…NMLV). 16–23 (GMIGSGKT) provides a ligand contact to ATP. LRR repeat units follow at residues 488–511 (SLNS…SKLQ), 512–534 (ALQL…ICEL), 536–558 (RLVY…IGNV), and 560–581 (TLEK…AVSL).

The protein belongs to the disease resistance NB-LRR family.

Potential disease resistance protein. In Arabidopsis thaliana (Mouse-ear cress), this protein is Putative disease resistance protein At5g47280.